A 361-amino-acid polypeptide reads, in one-letter code: G-protein coupled receptor 52 (361 aa).

At M1–T44 the chain is on the extracellular side. N2, N13, and N20 each carry an N-linked (GlcNAc...) asparagine glycan. A helical transmembrane segment spans residues V45 to F65. Residues H66–Q81 lie on the Cytoplasmic side of the membrane. Residues T82–L102 traverse the membrane as a helical segment. Over H103–Q115 the chain is Extracellular. A disulfide bridge connects residues C114 and C193. The helical transmembrane segment at V116 to S136 threads the bilayer. Over V137–R159 the chain is Cytoplasmic. A helical transmembrane segment spans residues I160–W180. At G181–C205 the chain is on the extracellular side. The helical transmembrane segment at F206–I226 threads the bilayer. At F227–M265 the chain is on the cytoplasmic side. A helical membrane pass occupies residues V266 to L286. Residues L287–P296 lie on the Extracellular side of the membrane. The chain crosses the membrane as a helical span at residues T297–Y317. The Cytoplasmic portion of the chain corresponds to S318–I361.

It belongs to the G-protein coupled receptor 1 family. As to expression, expressed in brain, especially in striatum. Expressed in the striatum, nucleus accumbens, and lateral globus pallidus.

Its subcellular location is the cell membrane. In terms of biological role, G- protein coupled receptor activated by antipsychotics reserpine leading to an increase in intracellular cAMP and its internalization. May play a role in locomotor activity through modulation of dopamine, NMDA and ADORA2A-induced locomotor activity. These behavioral changes are accompanied by modulation of the dopamine receptor signaling pathway in striatum. Modulates HTT level via cAMP-dependent but PKA independent mechanisms throught activation of RAB39B that translocates HTT to the endoplasmic reticulum, thus avoiding proteasome degradation. The polypeptide is G-protein coupled receptor 52 (Mus musculus (Mouse)).